Here is a 417-residue protein sequence, read N- to C-terminus: Tyrosine--tRNA ligase (417 aa).

Y39 lines the L-tyrosine pocket. The 'HIGH' region signature appears at 44–53; the sequence is CTARSLHIGN. Residues Y176 and Q180 each contribute to the L-tyrosine site. A 'KMSKS' region motif is present at residues 236 to 240; it reads KMGKT. K239 contributes to the ATP binding site. The S4 RNA-binding domain maps to 350–417; the sequence is FGVLNAFVKA…KKKHILIKPA (68 aa).

The protein belongs to the class-I aminoacyl-tRNA synthetase family. TyrS type 1 subfamily. In terms of assembly, homodimer.

It localises to the cytoplasm. The enzyme catalyses tRNA(Tyr) + L-tyrosine + ATP = L-tyrosyl-tRNA(Tyr) + AMP + diphosphate + H(+). Functionally, catalyzes the attachment of tyrosine to tRNA(Tyr) in a two-step reaction: tyrosine is first activated by ATP to form Tyr-AMP and then transferred to the acceptor end of tRNA(Tyr). The polypeptide is Tyrosine--tRNA ligase (Bradyrhizobium diazoefficiens (strain JCM 10833 / BCRC 13528 / IAM 13628 / NBRC 14792 / USDA 110)).